A 203-amino-acid chain; its full sequence is Histidine biosynthesis bifunctional protein HisIE (203 aa).

The phosphoribosyl-AMP cyclohydrolase stretch occupies residues 1 to 108 (MELDFDKMNG…GEKNEEPVMF (108 aa)). Positions 109–203 (LKALQDFIDK…ERHSSTWKKH (95 aa)) are phosphoribosyl-ATP pyrophosphohydrolase.

This sequence in the N-terminal section; belongs to the PRA-CH family. The protein in the C-terminal section; belongs to the PRA-PH family.

It localises to the cytoplasm. It catalyses the reaction 1-(5-phospho-beta-D-ribosyl)-ATP + H2O = 1-(5-phospho-beta-D-ribosyl)-5'-AMP + diphosphate + H(+). The enzyme catalyses 1-(5-phospho-beta-D-ribosyl)-5'-AMP + H2O = 1-(5-phospho-beta-D-ribosyl)-5-[(5-phospho-beta-D-ribosylamino)methylideneamino]imidazole-4-carboxamide. It functions in the pathway amino-acid biosynthesis; L-histidine biosynthesis; L-histidine from 5-phospho-alpha-D-ribose 1-diphosphate: step 2/9. Its pathway is amino-acid biosynthesis; L-histidine biosynthesis; L-histidine from 5-phospho-alpha-D-ribose 1-diphosphate: step 3/9. In Bacteroides thetaiotaomicron (strain ATCC 29148 / DSM 2079 / JCM 5827 / CCUG 10774 / NCTC 10582 / VPI-5482 / E50), this protein is Histidine biosynthesis bifunctional protein HisIE.